The following is a 113-amino-acid chain: Iron-sulfur cluster insertion protein ErpA (113 aa).

Iron-sulfur cluster-binding residues include Cys-41, Cys-105, and Cys-107.

Belongs to the HesB/IscA family. As to quaternary structure, homodimer. Requires iron-sulfur cluster as cofactor.

Required for insertion of 4Fe-4S clusters for at least IspG. This chain is Iron-sulfur cluster insertion protein ErpA, found in Hydrogenovibrio crunogenus (strain DSM 25203 / XCL-2) (Thiomicrospira crunogena).